A 239-amino-acid chain; its full sequence is NAD(P)H-quinone oxidoreductase subunit K, chloroplastic (239 aa).

[4Fe-4S] cluster is bound by residues Cys43, Cys44, Cys108, and Cys139. Residues 217–239 (KSSVSSRELGNESGKEDVSIQNK) are disordered. Residues 225–239 (LGNESGKEDVSIQNK) show a composition bias toward basic and acidic residues.

This sequence belongs to the complex I 20 kDa subunit family. As to quaternary structure, NDH is composed of at least 16 different subunits, 5 of which are encoded in the nucleus. [4Fe-4S] cluster is required as a cofactor.

Its subcellular location is the plastid. It is found in the chloroplast thylakoid membrane. The enzyme catalyses a plastoquinone + NADH + (n+1) H(+)(in) = a plastoquinol + NAD(+) + n H(+)(out). It catalyses the reaction a plastoquinone + NADPH + (n+1) H(+)(in) = a plastoquinol + NADP(+) + n H(+)(out). Functionally, NDH shuttles electrons from NAD(P)H:plastoquinone, via FMN and iron-sulfur (Fe-S) centers, to quinones in the photosynthetic chain and possibly in a chloroplast respiratory chain. The immediate electron acceptor for the enzyme in this species is believed to be plastoquinone. Couples the redox reaction to proton translocation, and thus conserves the redox energy in a proton gradient. The protein is NAD(P)H-quinone oxidoreductase subunit K, chloroplastic of Acorus calamus var. americanus (American sweet flag).